We begin with the raw amino-acid sequence, 90 residues long: Probable Fe(2+)-trafficking protein (90 aa).

The protein belongs to the Fe(2+)-trafficking protein family.

Its function is as follows. Could be a mediator in iron transactions between iron acquisition and iron-requiring processes, such as synthesis and/or repair of Fe-S clusters in biosynthetic enzymes. The polypeptide is Probable Fe(2+)-trafficking protein (Thioalkalivibrio sulfidiphilus (strain HL-EbGR7)).